We begin with the raw amino-acid sequence, 512 residues long: MDHSSNRFGNNGVESILPNYKLGKTLGIGSFGKVKIAEHVVTGHKVAIKILNRRKIKNMEMEEKVRREIKILRLFMHPHIIRQYEVIETTSDIYVVMEYVKSGELFDYIVEKGRLQEDEARNFFQQIISGVEYCHRNMVVHRDLKPENLLLDSRCNIKIADFGLSNVMRDGHFLKTSCGSPNYAAPEVISGKLYAGPEVDVWSCGVILYALLCGTLPFDDENIPNLFKKIKGGIYTLPSHLSSEARDLIPRMLIVDPVKRITIPEIRQHRWFQTHLPRYLAVSPPDTVEQAKKINEEIVQEVVNMGFDRNQVLESLRNRTQNDATVTYYLLLDNRFRVPSGYLESEFQETTDSGSNPMRTPEAGASPVGHWIPAHVDHYGLGARSQVPVDRKWALGLQSHAHPREIMNEVLKALQELNVCWKKIGHYNMKCRWVPGLADGQNTMVNNQLHFRDESSIIEDDCAMTSPTVIKFELQLYKAREEKYLLDIQRVNGPQFLFLDLCAAFLTELRVI.

Residues 20 to 272 (YKLGKTLGIG…IPEIRQHRWF (253 aa)) enclose the Protein kinase domain. Residues 26–34 (LGIGSFGKV) and Lys-49 contribute to the ATP site. Asp-143 serves as the catalytic Proton acceptor. The residue at position 165 (Ser-165) is a Phosphoserine. Thr-176 carries the phosphothreonine; by GRIK1 or GRIK2 modification. The tract at residues 291-391 (AKKINEEIVQ…GARSQVPVDR (101 aa)) is auto-inhibitory domain (AID). The UBA domain maps to 293-333 (KINEEIVQEVVNMGFDRNQVLESLRNRTQNDATVTYYLLLD). A regulatory domain (RD) region spans residues 295-512 (NEEIVQEVVN…AAFLTELRVI (218 aa)). The segment at 392 to 512 (KWALGLQSHA…AAFLTELRVI (121 aa)) is PPI. Residues 399 to 512 (SHAHPREIMN…AAFLTELRVI (114 aa)) form an interaction with PAD1 and SKP1 region. The 49-residue stretch at 463–511 (AMTSPTVIKFELQLYKAREEKYLLDIQRVNGPQFLFLDLCAAFLTELRV) folds into the KA1 domain.

This sequence belongs to the protein kinase superfamily. CAMK Ser/Thr protein kinase family. SNF1 subfamily. As to quaternary structure, subunit of a probable heterotrimeric complex consisting of an alpha catalytic (KIN10 or KIN11) subunit, and a beta (KINB) and a gamma (KING or SNF4) non-catalytic regulatory subunits. Interacts with KINB2, KINB3, SNF4 and probably with KINB1 and KING1. Interacts with SKP1/ASK1, PAD1 and the N-terminus of PRL1. Potential subunit of a SCF ubiquitin ligase complex consisting of a SNF1-related protein kinase, SKP1 and CUL1. The association of the SCF complex with the proteasome may be mediated by PAD1 and seems to be inhibited by the interaction with PRL1. Interacts with DSP4. Interacts with the begomovirus AL2 protein and the curtovirus L2 protein. Interacts with ATAF1. Interacts with CIPK14. Interacts with FLZ proteins through their FLZ-type zinc finger domains. Interacts with GEBP/STKR1. Interacts with REM4.1 and REM4.2. Interacts with ADK2. Interacts with IDD8. Interacts with FLZ3, FLZ9, TCP3, TCP13, HB21/ZHD3 and HB23/ZHD10. Interacts with WRI1. Interacts with IPK2b. Interacts with FLZ6 and FLZ10. In terms of processing, sumoylated by SIZ1. Phosphorylated at Thr-176 under submergence. Autophosphorylated. Phosphorylated at Thr-176 by GRIK1/SNAK2 and GRIK2/SNAK1. In terms of tissue distribution, expressed in roots, shoots, flower buds, flowers, siliques and leaves. Restrictly expressed to the base of the leaf, the vascular tissue, and the hydathodes.

The protein localises to the plastid. It is found in the chloroplast. It localises to the cytoplasm. The protein resides in the endoplasmic reticulum. The catalysed reaction is L-seryl-[protein] + ATP = O-phospho-L-seryl-[protein] + ADP + H(+). It catalyses the reaction L-threonyl-[protein] + ATP = O-phospho-L-threonyl-[protein] + ADP + H(+). Inactivated by the begomovirus AL2 protein or the curtovirus L2 protein. Activated by phosphorylation at Thr-176 by GRIK1/SNAK2 and GRIK2/SNAK1. Inhibited by trehalose-6-phosphate. Its function is as follows. Catalytic subunit of the probable trimeric SNF1-related protein kinase (SnRK) complex, a central regulator of cellular energy homeostasis, which, in response to seemingly unrelated darkness, sugar and stress conditions, activates energy-producing pathways and inhibits energy-consuming processes. May play a role in a signal transduction cascade regulating gene expression and carbohydrate metabolism in higher plants. The SnRK complex may also be involved in the regulation of fatty acid synthesis by phosphorylation of acetyl-CoA carboxylase and in assimilation of nitrogen by phosphorylating nitrate reductase. In vitro, KIN11 exhibits kinase activity on sucrose phosphate synthase and the kinase activity is inhibited by PRL1. May be a subunit of a SCF ubiquitin ligase complex and thus be involved in proteasomal ubiquitination. Involved in innate antiviral defenses. Phosphorylates REM4.1 in vitro. Phosphorylates ADK2 in vitro. This Arabidopsis thaliana (Mouse-ear cress) protein is SNF1-related protein kinase catalytic subunit alpha KIN11.